Consider the following 350-residue polypeptide: Methionine import ATP-binding protein MetN (350 aa).

The ABC transporter domain maps to 2–241; the sequence is IQIKNLKKEY…PQAPVTRSFV (240 aa). 38–45 lines the ATP pocket; sequence GHSGAGKS.

It belongs to the ABC transporter superfamily. Methionine importer (TC 3.A.1.24) family. In terms of assembly, the complex is composed of two ATP-binding proteins (MetN), two transmembrane proteins (MetI) and a solute-binding protein (MetQ).

Its subcellular location is the cell inner membrane. It carries out the reaction L-methionine(out) + ATP + H2O = L-methionine(in) + ADP + phosphate + H(+). The enzyme catalyses D-methionine(out) + ATP + H2O = D-methionine(in) + ADP + phosphate + H(+). Functionally, part of the ABC transporter complex MetNIQ involved in methionine import. Responsible for energy coupling to the transport system. In Francisella tularensis subsp. holarctica (strain LVS), this protein is Methionine import ATP-binding protein MetN.